A 306-amino-acid polypeptide reads, in one-letter code: Aspartate carbamoyltransferase catalytic subunit (306 aa).

Arg-51 and Thr-52 together coordinate carbamoyl phosphate. L-aspartate is bound at residue Lys-80. Positions 101, 129, and 132 each coordinate carbamoyl phosphate. Residues Arg-162 and Arg-224 each contribute to the L-aspartate site. Carbamoyl phosphate is bound by residues Leu-263 and Pro-264.

This sequence belongs to the aspartate/ornithine carbamoyltransferase superfamily. ATCase family. As to quaternary structure, heterododecamer (2C3:3R2) of six catalytic PyrB chains organized as two trimers (C3), and six regulatory PyrI chains organized as three dimers (R2).

It catalyses the reaction carbamoyl phosphate + L-aspartate = N-carbamoyl-L-aspartate + phosphate + H(+). Its pathway is pyrimidine metabolism; UMP biosynthesis via de novo pathway; (S)-dihydroorotate from bicarbonate: step 2/3. Functionally, catalyzes the condensation of carbamoyl phosphate and aspartate to form carbamoyl aspartate and inorganic phosphate, the committed step in the de novo pyrimidine nucleotide biosynthesis pathway. The protein is Aspartate carbamoyltransferase catalytic subunit of Parabacteroides distasonis (strain ATCC 8503 / DSM 20701 / CIP 104284 / JCM 5825 / NCTC 11152).